A 312-amino-acid chain; its full sequence is MAEVTAALVKELREKSGVGMMDCKKALVENNGDIDASIDWLRAKGLSKAAKKADRVAAEGLVGIVVRAEGAGMIAAAVEVNAETDFLSRNELFQTAVRKIARAGLDNEGVEAISAAKTPDGEVVSDLLTHLIATIGENMVLRRSARFAVAHGAVASYIHNATAPDLGRIGVLVAIEGAGDQTKILELGRKIAMHVAATAPLSLSPDDLDQAAIEKERQIFTEQALESGKPPAVVEKMVEGRIRKFLEEVVLLKQAFVMNPDQTVEQLVAEAGKELGSPLTVKGFVRLALGEGVEKGPEGDFAAEVAAMTGQA.

The interval 84-87 (TDFL) is involved in Mg(2+) ion dislocation from EF-Tu.

The protein belongs to the EF-Ts family.

The protein resides in the cytoplasm. Functionally, associates with the EF-Tu.GDP complex and induces the exchange of GDP to GTP. It remains bound to the aminoacyl-tRNA.EF-Tu.GTP complex up to the GTP hydrolysis stage on the ribosome. The polypeptide is Elongation factor Ts (Caulobacter sp. (strain K31)).